The chain runs to 409 residues: MLLWLIFFTPGWTLIDGSEMQRDFTWHLRKVPRIVSERTFHLTSPTFEADAKMMVNTVCGIECQKELPTPSLSELEDYLSYETVFENGTRTLTRVKVQDLVFEPTQNTTKGASVRRKRQVYGTDSRFSILDKRFLTNFPFSTAVKLSTGCSGILISPQHVLTAAHCVHDGKDYVKGSKKLRVGLLKMRNKSGGKKRRGSKRSRRETSGGDQREGPREHLQDRVKAGRRRKQSGGGQRVSEGRPSFRWTRVKNTHIPKGWARGGMGDAALDYDYALLELKRAHKKKYMELGISPTIKKMPGGMIHFSGFDNDRADQLVYRFCSVSDESNDLLYQYCDAESGSTGSGVYLRLKDPDKKNWKRKIIAVYSGHQWVDVHGVQKDYNVAVRITPLKYAQICLWIHGNDANCAYG.

The N-terminal stretch at 1–17 (MLLWLIFFTPGWTLIDG) is a signal peptide. 2 N-linked (GlcNAc...) asparagine glycosylation sites follow: Asn-87 and Asn-107. In terms of domain architecture, Peptidase S1 spans 120-404 (VYGTDSRFSI…ICLWIHGNDA (285 aa)). Cys-150 and Cys-166 form a disulfide bridge. Basic residues predominate over residues 188 to 203 (RNKSGGKKRRGSKRSR). The segment at 188–246 (RNKSGGKKRRGSKRSRRETSGGDQREGPREHLQDRVKAGRRRKQSGGGQRVSEGRPSFR) is disordered. Residues 204–224 (RETSGGDQREGPREHLQDRVK) show a composition bias toward basic and acidic residues.

Belongs to the peptidase S1 family.

The protein localises to the secreted. The protein is Inactive serine protease 35 (PRSS35) of Macaca mulatta (Rhesus macaque).